We begin with the raw amino-acid sequence, 307 residues long: Auxin-induced protein PCNT115 (307 aa).

The active-site Proton donor is tyrosine 64. Position 136 (histidine 136) interacts with substrate. 215–225 contributes to the NADP(+) binding site; it reads SPLGRGFLSSG.

The protein belongs to the aldo/keto reductase family. Aldo/keto reductase 2 subfamily.

This Nicotiana tabacum (Common tobacco) protein is Auxin-induced protein PCNT115.